The primary structure comprises 519 residues: Putative lipase ATG15 (519 aa).

Topologically, residues 1–5 (MYIPG) are cytoplasmic. Residues 6-26 (PLRLSSYLLPFLSSPSPPAQS) form a helical; Signal-anchor for type II membrane protein membrane-spanning segment. Topologically, residues 27 to 519 (SPDTRTISFK…CYKWEFGEWN (493 aa)) are lumenal. Residues Asn-48, Asn-133, Asn-196, Asn-220, Asn-302, and Asn-309 are each glycosylated (N-linked (GlcNAc...) asparagine). Residue Ser-318 is the Charge relay system of the active site. A glycan (N-linked (GlcNAc...) asparagine) is linked at Asn-361. The disordered stretch occupies residues 481–502 (RRGPKRQPGGEDPKHGGVPKPV).

It belongs to the AB hydrolase superfamily. Lipase family. Binds to both phosphatidylinositol (PI) and phosphatidylinositol 3,5-bisphosphate (PIP2).

Its subcellular location is the endosome. The protein resides in the multivesicular body membrane. It localises to the prevacuolar compartment membrane. The catalysed reaction is a triacylglycerol + H2O = a diacylglycerol + a fatty acid + H(+). In terms of biological role, lipase which is essential for lysis of subvacuolar cytoplasm to vacuole targeted bodies and intravacuolar autophagic bodies. Involved in the lysis of intravacuolar multivesicular body (MVB) vesicles. The intravacuolar membrane disintegration by ATG15 is critical to life span extension. The sequence is that of Putative lipase ATG15 (ATG15) from Cryptococcus neoformans var. neoformans serotype D (strain B-3501A) (Filobasidiella neoformans).